The sequence spans 147 residues: Hemoglobin subunit epsilon (147 aa).

One can recognise a Globin domain in the interval 3–147 (HFTAEEKVAI…VAIALGHKYH (145 aa)). Phosphoserine occurs at positions 14 and 51. Heme b contacts are provided by His64 and His93.

It belongs to the globin family. In terms of assembly, heterotetramer of two alpha chains and two epsilon chains in early embryonic hemoglobin Gower-2; two zeta chains and two epsilon chains in early embryonic hemoglobin Gower-1. As to expression, red blood cells.

Functionally, the epsilon chain is a beta-type chain of early mammalian embryonic hemoglobin. The sequence is that of Hemoglobin subunit epsilon (HBE1) from Cebus kaapori (Ka'apor capuchin).